A 31-amino-acid polypeptide reads, in one-letter code: Hyaluronidase (31 aa).

This sequence belongs to the glycosyl hydrolase 56 family. Post-translationally, contains 2 disulfide bonds. In terms of processing, N-glycosylated on at least two Asn residues by identical heptasaccharide units composed of Man, GlcNAc, and Fuc residues in the molar ration of 3:2:2. As to expression, expressed by the venom gland.

It is found in the secreted. The catalysed reaction is Random hydrolysis of (1-&gt;4)-linkages between N-acetyl-beta-D-glucosamine and D-glucuronate residues in hyaluronate.. In terms of biological role, hydrolyzes high molecular weight hyaluronic acid to produce small oligosaccharides. In Vespula maculifrons (Eastern yellow jacket), this protein is Hyaluronidase.